The primary structure comprises 323 residues: Acetyl esterase (323 aa).

Residues 91–93 carry the Involved in the stabilization of the negatively charged intermediate by the formation of the oxyanion hole motif; it reads HGG. Residues Ser-165, Asp-262, and His-292 contribute to the active site.

Belongs to the 'GDXG' lipolytic enzyme family. In terms of assembly, homodimer. Interacts with MalT and MelA.

The protein resides in the cytoplasm. In terms of biological role, displays esterase activity towards short chain fatty esters (acyl chain length of up to 8 carbons). Able to hydrolyze triacetylglycerol (triacetin) and tributyrylglycerol (tributyrin), but not trioleylglycerol (triolein) or cholesterol oleate. Negatively regulates MalT activity by antagonizing maltotriose binding. Inhibits MelA galactosidase activity. This Salmonella paratyphi A (strain AKU_12601) protein is Acetyl esterase.